Reading from the N-terminus, the 215-residue chain is MGATAGWAVTVYDKPASFFKEAPLDLQHRLFMKLGSTHSPFRARSEPEDPDTERSAFTERDSGSGLVTRLHERPALLVSSTSWTEFEQLTLDGQNLPSLVCVITGKGPLREYYSRLIHQKHFQHIQVCIPWLEGRGLPPLLGSVDLDVCLDTSSSGLDLPMKVVDMFRCCLPACAVNFKCLHELVKHEENRLVFEDSEELAAQLQYFADAFLKLS.

Positions 40 to 66 (PFRARSEPEDPDTERSAFTERDSGSGL) are disordered. Residues 43–62 (ARSEPEDPDTERSAFTERDS) show a composition bias toward basic and acidic residues.

This sequence belongs to the glycosyltransferase group 1 family.

Putative glycosyltransferase. This chain is Putative glycosyltransferase ALG1L2 (ALG1L2), found in Homo sapiens (Human).